Consider the following 1039-residue polypeptide: Multidrug resistance protein MdtB (1039 aa).

Transmembrane regions (helical) follow at residues 16–36 (FILR…AGII), 342–362 (DVQF…YVFL), 373–393 (VAVP…GFSI), 396–416 (LTLM…IVVI), 440–460 (IGFT…PLLF), 472–492 (FAVT…TLTP), 537–557 (WLTL…YLLI), 863–883 (LGGT…VLGV), 888–908 (FIHP…ALLA), 911–931 (MAGS…IGIV), 968–988 (ILMT…STGV), and 1002–1022 (GGLV…YLLF).

The protein belongs to the resistance-nodulation-cell division (RND) (TC 2.A.6) family. MdtB subfamily. Part of a tripartite efflux system composed of MdtA, MdtB and MdtC. MdtB forms a heteromultimer with MdtC.

It localises to the cell inner membrane. This is Multidrug resistance protein MdtB from Serratia proteamaculans (strain 568).